A 275-amino-acid polypeptide reads, in one-letter code: MAVKDRYMSKIKQETKPWIKRFGRLGYFAFGGVFILLGVLAFMTAAGAGRAKDSSGALQTLSRMPYGSLLLFFIGIGLIGYVIWMVLSAIKDTEGHGNSRRGLSRRIGNFFSAAVYTSIAWNALRFVFGQGDGGTSEQTWSAYVLAQPFGQWLTGLTGAGFIVFAIVQFMKGVRAAFMKEFDTSKMNKQMICITKNTGRAGNIARAIIFSAIGYFLIKTAMTADPDDTRGFDGALAELAQQPHGKLILSILALGLILYGMYAIMKGIYQHMTWEK.

A run of 6 helical transmembrane segments spans residues Leu25–Ala45, Leu70–Ile90, Ile107–Val127, Phe149–Phe169, Ile203–Ala223, and Ile247–Ile267.

It is found in the cell membrane. This is an uncharacterized protein from Bacillus subtilis (strain 168).